The following is a 73-amino-acid chain: Neuropeptide-like protein 29 (73 aa).

The N-terminal stretch at 1–22 (MISTSSILVLVVLLACFMAASA) is a signal peptide. Residues Tyr-29, Tyr-39, Tyr-47, Tyr-55, and Tyr-63 each carry the tyrosine amide modification. Trp-71 bears the Tryptophan amide mark.

The protein belongs to the YARP (YGGW-amide related peptide) family. In terms of tissue distribution, weakly or not expressed in absence of infection. Upon infection by D.coniospora, it is expressed in hypoderm. Also expressed in perivulval cells when D.coniospora spores adhere to this region. Expressed in hypodermis upon physical injury.

The protein resides in the secreted. Its function is as follows. Antimicrobial peptides that have antibacterial activity against the Gram-negative bacteria S.marcescens. Has antifungal activity against D.coniospora. May play a role in response to physical injury and osmotic stress. Through the neuropeptide receptor nlp-29, induces sleep upon activation of the innate immune response to molting and injury to the adult epidermis. The polypeptide is Neuropeptide-like protein 29 (Caenorhabditis elegans).